A 358-amino-acid polypeptide reads, in one-letter code: MSKLNIKGIVKRCDDYGKLVNRYCGPVFVGFATSLITLIAITYFTIIFPATSDFSNLFFIFNFFCDLSISLFLTYGIYFNYIKAIITKPGYPNLNSTLINNINSNINNSNNNKDKDKILIIDNVKWSYCKKCSKAKPPRCHHCSVCDKCVLKMDHHCPWIGGCVGFYNYRYFFLFLSYLWVSVCYVLAHSLPLLFGGYLYSKKYTEIDRLLVIISSIGSFITFVAVGSFGGFHAYLIGSGQTSIENLYPPKKRPNYSLTSIKDNFQIVLGKGDYWFSGLLPINYTPIGNGCDFKLNISNEDNNKNNENNENNENNEIDNHNNNNNNNNNNNNNEKEDNINENDNLISYDTDEYNRHKK.

Transmembrane regions (helical) follow at residues 28–48, 57–77, 171–191, and 210–230; these read FVGFATSLITLIAITYFTIIF, LFFIFNFFCDLSISLFLTYGI, YFFLFLSYLWVSVCYVLAHSL, and LLVIISSIGSFITFVAVGSFG. A DHHC domain is found at 127 to 177; it reads SYCKKCSKAKPPRCHHCSVCDKCVLKMDHHCPWIGGCVGFYNYRYFFLFLS. Residues Asn255 and Asn296 are each glycosylated (N-linked (GlcNAc...) asparagine). Positions 302–358 are disordered; sequence NNKNNENNENNENNEIDNHNNNNNNNNNNNNNEKEDNINENDNLISYDTDEYNRHKK. A compositionally biased stretch (low complexity) spans 305–332; sequence NNENNENNENNEIDNHNNNNNNNNNNNN.

This sequence belongs to the DHHC palmitoyltransferase family.

It localises to the membrane. The catalysed reaction is L-cysteinyl-[protein] + hexadecanoyl-CoA = S-hexadecanoyl-L-cysteinyl-[protein] + CoA. The protein is Putative ZDHHC-type palmitoyltransferase 4 of Dictyostelium discoideum (Social amoeba).